A 132-amino-acid polypeptide reads, in one-letter code: Holo-[acyl-carrier-protein] synthase (132 aa).

Residues Asp-8 and Glu-64 each contribute to the Mg(2+) site.

The protein belongs to the P-Pant transferase superfamily. AcpS family. The cofactor is Mg(2+).

It localises to the cytoplasm. The enzyme catalyses apo-[ACP] + CoA = holo-[ACP] + adenosine 3',5'-bisphosphate + H(+). Its function is as follows. Transfers the 4'-phosphopantetheine moiety from coenzyme A to a Ser of acyl-carrier-protein. This is Holo-[acyl-carrier-protein] synthase from Shewanella sediminis (strain HAW-EB3).